Here is a 340-residue protein sequence, read N- to C-terminus: tRNA-dihydrouridine(20/20a) synthase (340 aa).

FMN-binding positions include 22–24 (PMM) and glutamine 75. Cysteine 105 acts as the Proton donor in catalysis. Residues lysine 144, histidine 177, 217-219 (NGG), and 239-240 (GR) each bind FMN.

The protein belongs to the Dus family. DusA subfamily. FMN is required as a cofactor.

It carries out the reaction 5,6-dihydrouridine(20) in tRNA + NADP(+) = uridine(20) in tRNA + NADPH + H(+). The enzyme catalyses 5,6-dihydrouridine(20) in tRNA + NAD(+) = uridine(20) in tRNA + NADH + H(+). The catalysed reaction is 5,6-dihydrouridine(20a) in tRNA + NADP(+) = uridine(20a) in tRNA + NADPH + H(+). It catalyses the reaction 5,6-dihydrouridine(20a) in tRNA + NAD(+) = uridine(20a) in tRNA + NADH + H(+). Its function is as follows. Catalyzes the synthesis of 5,6-dihydrouridine (D), a modified base found in the D-loop of most tRNAs, via the reduction of the C5-C6 double bond in target uridines. Specifically modifies U20 and U20a in tRNAs. This chain is tRNA-dihydrouridine(20/20a) synthase, found in Xylella fastidiosa (strain 9a5c).